A 41-amino-acid chain; its full sequence is MSDDNAAKIIFKKKSTGKIVGEMKATSLAADTILQNDNKSK.

In Bacillus subtilis (strain 168), this protein is SPbeta prophage-derived uncharacterized protein YosF (yosF).